The primary structure comprises 255 residues: Acetylglutamate kinase (255 aa).

Substrate is bound by residues 40-41 (GG), R62, and N157.

The protein belongs to the acetylglutamate kinase family. ArgB subfamily.

It is found in the cytoplasm. The catalysed reaction is N-acetyl-L-glutamate + ATP = N-acetyl-L-glutamyl 5-phosphate + ADP. The protein operates within amino-acid biosynthesis; L-arginine biosynthesis; N(2)-acetyl-L-ornithine from L-glutamate: step 2/4. Functionally, catalyzes the ATP-dependent phosphorylation of N-acetyl-L-glutamate. This Parabacteroides distasonis (strain ATCC 8503 / DSM 20701 / CIP 104284 / JCM 5825 / NCTC 11152) protein is Acetylglutamate kinase.